The primary structure comprises 140 residues: Transmembrane protein 107 (140 aa).

Transmembrane regions (helical) follow at residues 7–27 (LVPS…TLFW) and 53–73 (LVAA…GFLS). Residue Asn-79 is glycosylated (N-linked (GlcNAc...) asparagine). The next 2 helical transmembrane spans lie at 83 to 103 (SLIS…FIFE) and 113 to 133 (IFVF…VTVF).

As to quaternary structure, part of the tectonic-like complex (also named B9 complex). Interacts with TMEM237, TMEM231, MKS1 and TMEM216.

It is found in the membrane. It localises to the cell projection. The protein resides in the cilium. In terms of biological role, plays a role in cilia formation and embryonic patterning. Requires for normal Sonic hedgehog (Shh) signaling in the neural tube and acts in combination with GLI2 and GLI3 to pattern ventral and intermediate neuronal cell types. During ciliogenesis regulates the ciliary transition zone localization of some MKS complex proteins. This Homo sapiens (Human) protein is Transmembrane protein 107.